Reading from the N-terminus, the 1534-residue chain is Slit homolog 1 protein (1534 aa).

An N-terminal signal peptide occupies residues 1–33 (MALTPGWGSSAGPVRPELWLLLWAAAWRLGASA). Residues 34–61 (CPALCTCTGTTVDCHGTGLQAIPKNIPR) form the LRRNT domain. LRR repeat units follow at residues 62-83 (NTER…DFAG), 86-107 (QLRV…AFDD), 110-131 (ELER…LFQN), 134-155 (ALSR…AFRG), 158-179 (DLKN…AFRA), and 182-203 (GLEV…SFNH). N72 is a glycosylation site (N-linked (GlcNAc...) asparagine). N-linked (GlcNAc...) asparagine glycosylation is present at N192. One can recognise an LRRCT 1 domain in the interval 215 to 265 (NHLFCDCHLAWLSQWLRQRPTIGLFTQCSGPASLRGLNVAEVQKSEFSCSG). The region spanning 273–309 (PTCTLSSGSCPAMCTCSNGIVDCRGKGLTAIPANLPE) is the LRRNT 2 domain. An intrachain disulfide couples C286 to C295. LRR repeat units lie at residues 310 to 331 (TMTE…AFSP), 334 to 355 (KLRR…AFQG), 358 to 379 (SLNS…VFGG), 382 to 403 (TLQL…AFQD), and 406 to 427 (NLSL…TFTS). N-linked (GlcNAc...) asparagine glycosylation occurs at N406. The region spanning 439-489 (NPFICDCNLKWLADFLRTNPIETSGARCASPRRLANKRIGQIKSKKFRCSA) is the LRRCT 2 domain. Intrachain disulfides connect C443–C466, C445–C487, C513–C519, and C517–C526. The LRRNT 3 domain maps to 504 to 540 (NSECNSDVVCPHKCRCEANVVECSSLKLTKIPERIPQ). LRR repeat units lie at residues 541–562 (STAE…GMFK), 566–587 (HLKK…AFEG), 590–611 (SVSE…MFRG), 614–635 (GLRT…SFTG), and 638–659 (NVRL…AFDT). N-linked (GlcNAc...) asparagine glycosylation occurs at N571. A glycan (N-linked (GlcNAc...) asparagine) is linked at N630. The LRRCT 3 domain occupies 671 to 721 (NPFNCNCQLAWLGGWLRKRKIVTGNPRCQNPDFLRQIPLQDVAFPDFRCEE). Cystine bridges form between C675–C698 and C677–C719. The LRRNT 4 domain occupies 725–761 (EGGCLPRPQCPQECACLDTVVRCSNKHLRALPKGIPK). N-linked (GlcNAc...) asparagine glycosylation is found at N762, N801, and N806. LRR repeat units follow at residues 762-783 (NVTE…LSTF), 785-806 (YLQL…SFTN), 809-830 (QLTT…AFQG), and 833-854 (SLRL…IFAD). The LRRCT 4 domain maps to 866–916 (NPLYCDCHLRWLSSWVKTGYKEPGIARCAGPQDMEGKLLLTTPAKKFECQG). 6 EGF-like domains span residues 927–962 (DLCL…RDCE), 964–1003 (SLDS…PTCG), 1005–1041 (NTDD…KACE), 1043–1081 (LVDL…DNCS), 1083–1119 (NQDD…QLCE), and 1127–1163 (PKSP…PECE). Intrachain disulfides connect C929/C940, C934/C950, C952/C961, C968/C979, C973/C991, C993/C1002, C1009/C1020, C1014/C1029, C1031/C1040, C1047/C1060, C1054/C1069, C1071/C1080, C1087/C1098, C1092/C1107, C1109/C1118, C1131/C1142, C1136/C1151, and C1153/C1162. The N-linked (GlcNAc...) asparagine glycan is linked to N1026. A glycan (N-linked (GlcNAc...) asparagine) is linked at N1079. The Laminin G-like domain maps to 1166 to 1339 (LSVNFVDRDT…QMKPGVVPGC (174 aa)). 3 N-linked (GlcNAc...) asparagine glycosylation sites follow: N1189, N1259, and N1306. Disulfide bonds link C1313/C1339, C1342/C1352, C1347/C1362, C1364/C1373, C1381/C1391, C1386/C1401, C1403/C1412, C1422/C1432, C1427/C1442, C1444/C1453, C1459/C1498, C1477/C1512, C1488/C1528, and C1492/C1530. EGF-like domains follow at residues 1340–1374 (EPCR…LHCD), 1377–1413 (ADGP…ALCN), and 1418–1454 (LAEP…ELCE). One can recognise a CTCK domain in the interval 1459 to 1534 (CRGDPVRDFH…PTKCGCALCA (76 aa)).

In terms of assembly, interacts with ROBO1 and GREM1. In terms of tissue distribution, predominantly expressed in adult forebrain. Expressed in fetal brain, lung and kidney.

It is found in the secreted. In terms of biological role, thought to act as molecular guidance cue in cellular migration, and function appears to be mediated by interaction with roundabout homolog receptors. During neural development involved in axonal navigation at the ventral midline of the neural tube and projection of axons to different regions. SLIT1 and SLIT2 together seem to be essential for midline guidance in the forebrain by acting as repulsive signal preventing inappropriate midline crossing by axons projecting from the olfactory bulb. In Homo sapiens (Human), this protein is Slit homolog 1 protein (SLIT1).